An 89-amino-acid chain; its full sequence is Large ribosomal subunit protein uL24 (89 aa).

This sequence belongs to the universal ribosomal protein uL24 family. Part of the 50S ribosomal subunit.

Its function is as follows. One of two assembly initiator proteins, it binds directly to the 5'-end of the 23S rRNA, where it nucleates assembly of the 50S subunit. In terms of biological role, one of the proteins that surrounds the polypeptide exit tunnel on the outside of the subunit. The sequence is that of Large ribosomal subunit protein uL24 from Chlorobium chlorochromatii (strain CaD3).